We begin with the raw amino-acid sequence, 108 residues long: UPF0145 protein LCA_1282 (108 aa).

Belongs to the UPF0145 family.

This Latilactobacillus sakei subsp. sakei (strain 23K) (Lactobacillus sakei subsp. sakei) protein is UPF0145 protein LCA_1282.